A 564-amino-acid polypeptide reads, in one-letter code: Dihydroxy-acid dehydratase (564 aa).

Residues 1–10 are compositionally biased toward basic residues; that stretch reads MTDTRTKRRM. A disordered region spans residues 1 to 23; the sequence is MTDTRTKRRMNWNSHHITQGDER. Residue C57 participates in [2Fe-2S] cluster binding. D89 provides a ligand contact to Mg(2+). Residue C130 participates in [2Fe-2S] cluster binding. The Mg(2+) site is built by D131 and K132. K132 is subject to N6-carboxylysine. Position 202 (C202) interacts with [2Fe-2S] cluster. E454 serves as a coordination point for Mg(2+). Residue S480 is the Proton acceptor of the active site.

Belongs to the IlvD/Edd family. Homodimer. [2Fe-2S] cluster serves as cofactor. Requires Mg(2+) as cofactor.

The enzyme catalyses (2R)-2,3-dihydroxy-3-methylbutanoate = 3-methyl-2-oxobutanoate + H2O. The catalysed reaction is (2R,3R)-2,3-dihydroxy-3-methylpentanoate = (S)-3-methyl-2-oxopentanoate + H2O. It functions in the pathway amino-acid biosynthesis; L-isoleucine biosynthesis; L-isoleucine from 2-oxobutanoate: step 3/4. The protein operates within amino-acid biosynthesis; L-valine biosynthesis; L-valine from pyruvate: step 3/4. Its function is as follows. Functions in the biosynthesis of branched-chain amino acids. Catalyzes the dehydration of (2R,3R)-2,3-dihydroxy-3-methylpentanoate (2,3-dihydroxy-3-methylvalerate) into 2-oxo-3-methylpentanoate (2-oxo-3-methylvalerate) and of (2R)-2,3-dihydroxy-3-methylbutanoate (2,3-dihydroxyisovalerate) into 2-oxo-3-methylbutanoate (2-oxoisovalerate), the penultimate precursor to L-isoleucine and L-valine, respectively. The chain is Dihydroxy-acid dehydratase from Deinococcus geothermalis (strain DSM 11300 / CIP 105573 / AG-3a).